We begin with the raw amino-acid sequence, 164 residues long: Putative HTH-type transcriptional regulator ORF2 (164 aa).

Positions 2–131 (RLTTKGRYAV…SGISLADLVA (130 aa)) constitute an HTH rrf2-type domain.

The polypeptide is Putative HTH-type transcriptional regulator ORF2 (Azotobacter vinelandii).